A 303-amino-acid chain; its full sequence is Hydroxyacylglutathione hydrolase, mitochondrial (303 aa).

Positions 97, 99, 101, 102, 153, and 177 each coordinate Zn(2+). Residues 186 to 188 (KFF), 216 to 218 (HEY), and 292 to 295 (RKEK) contribute to the substrate site. H216 is a Zn(2+) binding site.

This sequence belongs to the metallo-beta-lactamase superfamily. Glyoxalase II family. Monomer. Zn(2+) serves as cofactor.

The protein resides in the mitochondrion matrix. It is found in the cytoplasm. It catalyses the reaction an S-(2-hydroxyacyl)glutathione + H2O = a 2-hydroxy carboxylate + glutathione + H(+). The catalysed reaction is (R)-S-lactoylglutathione + H2O = (R)-lactate + glutathione + H(+). Functionally, thiolesterase that catalyzes the hydrolysis of S-D-lactoyl-glutathione to form glutathione and D-lactic acid. The polypeptide is Hydroxyacylglutathione hydrolase, mitochondrial (hagh) (Danio rerio (Zebrafish)).